The primary structure comprises 166 residues: Large ribosomal subunit protein uL10 (166 aa).

This sequence belongs to the universal ribosomal protein uL10 family. Part of the ribosomal stalk of the 50S ribosomal subunit. The N-terminus interacts with L11 and the large rRNA to form the base of the stalk. The C-terminus forms an elongated spine to which L12 dimers bind in a sequential fashion forming a multimeric L10(L12)X complex.

Forms part of the ribosomal stalk, playing a central role in the interaction of the ribosome with GTP-bound translation factors. In Shewanella baltica (strain OS223), this protein is Large ribosomal subunit protein uL10.